A 506-amino-acid chain; its full sequence is Maturase K (506 aa).

It belongs to the intron maturase 2 family. MatK subfamily.

Its subcellular location is the plastid. It is found in the chloroplast. Its function is as follows. Usually encoded in the trnK tRNA gene intron. Probably assists in splicing its own and other chloroplast group II introns. The polypeptide is Maturase K (Melilotus albus (White sweet clover)).